We begin with the raw amino-acid sequence, 551 residues long: Cytochrome P450 monooxygenase virE (551 aa).

The signal sequence occupies residues 1-25 (MPKPWVVFGLGTLVLFLWRLNKIGR). N-linked (GlcNAc...) asparagine glycosylation is present at Asn-392. Cys-439 is a heme binding site.

Belongs to the cytochrome P450 family. The cofactor is heme.

It participates in secondary metabolite biosynthesis. Cytochrome P450 monooxygenase; part of the gene cluster that mediates the biosynthesis of virensols and trichoxide, fungal natural products that contain or are derived from a salicylaldehyde core. The pathway begins with the synthesis of the reduced chain in virensol C by the highly reducing polyketide synthase virA via condensation of one acetate and 8 malonate units. VirA has interesting programming rules since the first 2 ketides are fully reduced, the 3 following ketides undergo beta-dehydration, and the last 3 ketides are only reduced to beta-hydroxys to yield the trihydroxy portion. The production of aldehyde virensol C by virA alone is surprising, since virA does not contain a reductase (R) domain that is typically associated with reductive product release in HRPKS. The cupin-domain enzyme virC is involved in enhancing virA product turnover. The short-chain dehydrogenase virB then oxidizes the C-7 alcohol of virensol C to a ketone, yielding virensol D. Virensol D is further transformed to salicylaldehyde 5-deoxyaurocitrin by the short-chain dehydrogenase virD. VirD catalyzes the dehydrogenation of C-3 to form the beta-ketone aldehyde, which is followed by the generation of the nucleophilic C-2 that is required for the intramolecular aldol condensation between C-2 and C-7, itself followed by dehydration and aromatization which leads to salicylaldehyde 5-deoxyaurocitrin. While the dehydrogenation of virensol D is definitely catalyzed by virD, the aldol condensation and dehydration may be uncatalyzed or assisted by virD. The short chain dehydrogenase virG then converts salicylaldehyde 5-deoxyaurocitrin into virensol B which is further hydroxylated by the cytochrome P450 monooxygenase virE to yield the hydroquinone virensol A. VirI then may oxidize virensol A to form the quinone, while virH performs the epoxidation. Finally, the two remaining short-chain dehydrogenases, virK and virL, are probably responsible for reducing the ketones to the corresponding alcohols to furnish the epoxycyclohexanol structure in trichoxide. The chain is Cytochrome P450 monooxygenase virE from Hypocrea virens (strain Gv29-8 / FGSC 10586) (Gliocladium virens).